The chain runs to 427 residues: Glutamate-1-semialdehyde 2,1-aminomutase (427 aa).

The residue at position 268 (lysine 268) is an N6-(pyridoxal phosphate)lysine.

It belongs to the class-III pyridoxal-phosphate-dependent aminotransferase family. HemL subfamily. The cofactor is pyridoxal 5'-phosphate.

Its subcellular location is the cytoplasm. It catalyses the reaction (S)-4-amino-5-oxopentanoate = 5-aminolevulinate. Its pathway is porphyrin-containing compound metabolism; protoporphyrin-IX biosynthesis; 5-aminolevulinate from L-glutamyl-tRNA(Glu): step 2/2. The chain is Glutamate-1-semialdehyde 2,1-aminomutase from Methanococcus maripaludis (strain C6 / ATCC BAA-1332).